A 128-amino-acid chain; its full sequence is MTNIPAELAYTAEHEWVQDLSEDSTFKVGITDHAQSELGEVVFVQLPEVGDTVTAGDVVGEIESTKSVSDLFAPVTGEIVSVNDELADNPGLLNEAPYEAGWLFTVRVESQDATAQLLDAQAYQQLLD.

One can recognise a Lipoyl-binding domain in the interval 25–107 (TFKVGITDHA…YEAGWLFTVR (83 aa)). Lys-66 is subject to N6-lipoyllysine.

This sequence belongs to the GcvH family. The glycine cleavage system is composed of four proteins: P, T, L and H. Requires (R)-lipoate as cofactor.

Its function is as follows. The glycine cleavage system catalyzes the degradation of glycine. The H protein shuttles the methylamine group of glycine from the P protein to the T protein. The protein is Glycine cleavage system H protein of Kocuria rhizophila (strain ATCC 9341 / DSM 348 / NBRC 103217 / DC2201).